The following is a 67-amino-acid chain: Ayadualin (67 aa).

The first 20 residues, 1-20, serve as a signal peptide directing secretion; the sequence is MNKIILFSAVFLALVFCAEA. Residues 35-54 are compositionally biased toward acidic residues; sequence PDDTVDIDEGLPDAFDEDYE. The segment at 35 to 67 is disordered; it reads PDDTVDIDEGLPDAFDEDYEQDGHNPYPCRGDC. The Integrin-binding motif motif lies at 64-66; sequence RGD.

In terms of tissue distribution, salivary gland.

Its subcellular location is the secreted. In terms of biological role, inhibits collagen- and ADP-induced host platelet aggregation by blocking the binding of host integrin alpha-IIb/beta-3 (ITGA2B/ITGB3) to fibrinogen. Inhibits the intrinsic blood coagulation pathway in the host by blocking the activity of host coagulation factor XIIa (F12). This is Ayadualin from Lutzomyia ayacuchensis (Sand fly).